We begin with the raw amino-acid sequence, 239 residues long: Exosome complex exonuclease RRP46 homolog (239 aa).

M1 is subject to N-acetylmethionine.

Belongs to the RNase PH family. Probable component of the RNA exosome complex.

The protein resides in the nucleus. It localises to the nucleolus. In terms of biological role, probable component of the exosome 3'-&gt;5' exoribonuclease complex, a complex that degrades inherently unstable mRNAs containing AU-rich elements (AREs) within their 3'-untranslated regions. In Arabidopsis thaliana (Mouse-ear cress), this protein is Exosome complex exonuclease RRP46 homolog.